The chain runs to 206 residues: Uracil phosphoribosyltransferase (206 aa).

5-phospho-alpha-D-ribose 1-diphosphate-binding positions include Arg-76, Arg-101, and 128–136; that span reads DPMLATGGS. Uracil contacts are provided by residues Ile-191 and 196–198; that span reads GDA. Asp-197 lines the 5-phospho-alpha-D-ribose 1-diphosphate pocket.

Belongs to the UPRTase family. The cofactor is Mg(2+).

The enzyme catalyses UMP + diphosphate = 5-phospho-alpha-D-ribose 1-diphosphate + uracil. It participates in pyrimidine metabolism; UMP biosynthesis via salvage pathway; UMP from uracil: step 1/1. Its activity is regulated as follows. Allosterically activated by GTP. Its function is as follows. Catalyzes the conversion of uracil and 5-phospho-alpha-D-ribose 1-diphosphate (PRPP) to UMP and diphosphate. In Malacoplasma penetrans (strain HF-2) (Mycoplasma penetrans), this protein is Uracil phosphoribosyltransferase.